Consider the following 447-residue polypeptide: CBL-interacting serine/threonine-protein kinase 9 (447 aa).

Residues 19 to 274 (YEMGRTLGEG…IAELLEDEWF (256 aa)) form the Protein kinase domain. Residues 25–33 (LGEGSFAKV) and Lys-48 each bind ATP. The Proton acceptor role is filled by Asp-142. The tract at residues 160–189 (DFGLSAFSRQVREDGLLHTACGTPNYVAPE) is activation loop. Residue Ser-164 is modified to Phosphoserine. Residue Thr-178 is modified to Phosphothreonine. Positions 312 to 336 (EKPVSMNAFELISSSSEFSLENLFE) constitute an NAF domain. The interval 343–372 (KKETRFTSQRSASEIMSKMEETAKPLGFNV) is PPI.

Belongs to the protein kinase superfamily. CAMK Ser/Thr protein kinase family. SNF1 subfamily. As to quaternary structure, interacts with CBL2 and CBL3. The cofactor is Mn(2+). As to expression, expressed at low levels in roots and shoots. Detected in root vascular bundles and in the leaf vascular tissue and hydathode, but not in root tips.

It is found in the cytoplasm. The protein resides in the nucleus. It catalyses the reaction L-seryl-[protein] + ATP = O-phospho-L-seryl-[protein] + ADP + H(+). The enzyme catalyses L-threonyl-[protein] + ATP = O-phospho-L-threonyl-[protein] + ADP + H(+). In terms of biological role, CIPK serine-threonine protein kinases interact with CBL proteins. Binding of a CBL protein to the regulatory NAF domain of CIPK protein lead to the activation of the kinase in a calcium-dependent manner. Involved in K(+) homeostasis under low-K(+) stress. This is CBL-interacting serine/threonine-protein kinase 9 (CIPK9) from Arabidopsis thaliana (Mouse-ear cress).